The sequence spans 278 residues: Sulfur carrier protein FdhD (278 aa).

Catalysis depends on Cys121, which acts as the Cysteine persulfide intermediate. Phe260–Arg265 contributes to the Mo-bis(molybdopterin guanine dinucleotide) binding site.

The protein belongs to the FdhD family.

It localises to the cytoplasm. Functionally, required for formate dehydrogenase (FDH) activity. Acts as a sulfur carrier protein that transfers sulfur from IscS to the molybdenum cofactor prior to its insertion into FDH. This Salmonella paratyphi A (strain ATCC 9150 / SARB42) protein is Sulfur carrier protein FdhD.